The sequence spans 286 residues: Thymidylate synthase (286 aa).

DUMP is bound at residue 140–141 (RR). The active-site Nucleophile is cysteine 161. DUMP is bound by residues 185–188 (RSND), asparagine 196, and 226–228 (HIY). Aspartate 188 contacts (6R)-5,10-methylene-5,6,7,8-tetrahydrofolate. Alanine 285 lines the (6R)-5,10-methylene-5,6,7,8-tetrahydrofolate pocket.

Belongs to the thymidylate synthase family. Bacterial-type ThyA subfamily. As to quaternary structure, homodimer.

The protein localises to the cytoplasm. It carries out the reaction dUMP + (6R)-5,10-methylene-5,6,7,8-tetrahydrofolate = 7,8-dihydrofolate + dTMP. Its pathway is pyrimidine metabolism; dTTP biosynthesis. Catalyzes the reductive methylation of 2'-deoxyuridine-5'-monophosphate (dUMP) to 2'-deoxythymidine-5'-monophosphate (dTMP) while utilizing 5,10-methylenetetrahydrofolate (mTHF) as the methyl donor and reductant in the reaction, yielding dihydrofolate (DHF) as a by-product. This enzymatic reaction provides an intracellular de novo source of dTMP, an essential precursor for DNA biosynthesis. The chain is Thymidylate synthase from Streptococcus thermophilus (strain ATCC BAA-491 / LMD-9).